Here is a 353-residue protein sequence, read N- to C-terminus: Ion-translocating oxidoreductase complex subunit D (353 aa).

3 helical membrane-spanning segments follow: residues 20 to 39 (LMRL…WYFF), 68 to 88 (PISH…LGIC), and 129 to 149 (VMLL…LTLV). FMN phosphoryl threonine is present on Thr187. Transmembrane regions (helical) follow at residues 215 to 235 (LALG…FLIS), 238 to 258 (AIAW…SFIG), 267 to 287 (ASTM…FILT), and 300 to 320 (IIVG…GGYP).

The protein belongs to the NqrB/RnfD family. The complex is composed of six subunits: RnfA, RnfB, RnfC, RnfD, RnfE and RnfG. The cofactor is FMN.

It is found in the cell inner membrane. In terms of biological role, part of a membrane-bound complex that couples electron transfer with translocation of ions across the membrane. The polypeptide is Ion-translocating oxidoreductase complex subunit D (Colwellia psychrerythraea (strain 34H / ATCC BAA-681) (Vibrio psychroerythus)).